The primary structure comprises 156 residues: ATP synthase subunit b', chloroplastic (156 aa).

A helical transmembrane segment spans residues 20 to 42 (NGTLPLMALQFLTLMVLLNTIFY).

It belongs to the ATPase B chain family. In terms of assembly, F-type ATPases have 2 components, F(1) - the catalytic core - and F(0) - the membrane proton channel. F(1) has five subunits: alpha(3), beta(3), gamma(1), delta(1), epsilon(1). F(0) has four main subunits: a(1), b(1), b'(1) and c(10-14). The alpha and beta chains form an alternating ring which encloses part of the gamma chain. F(1) is attached to F(0) by a central stalk formed by the gamma and epsilon chains, while a peripheral stalk is formed by the delta, b and b' chains.

It localises to the plastid. The protein localises to the chloroplast thylakoid membrane. In terms of biological role, f(1)F(0) ATP synthase produces ATP from ADP in the presence of a proton or sodium gradient. F-type ATPases consist of two structural domains, F(1) containing the extramembraneous catalytic core and F(0) containing the membrane proton channel, linked together by a central stalk and a peripheral stalk. During catalysis, ATP synthesis in the catalytic domain of F(1) is coupled via a rotary mechanism of the central stalk subunits to proton translocation. Its function is as follows. Component of the F(0) channel, it forms part of the peripheral stalk, linking F(1) to F(0). The b'-subunit is a diverged and duplicated form of b found in plants and photosynthetic bacteria. This Pyropia yezoensis (Susabi-nori) protein is ATP synthase subunit b', chloroplastic.